Consider the following 215-residue polypeptide: Cytochrome b6 (215 aa).

The chain crosses the membrane as a helical span at residues 32-52 (IFYCLGGITLTCFLVQVATGF). Cysteine 35 is a heme c binding site. Heme b-binding residues include histidine 86 and histidine 100. The next 3 membrane-spanning stretches (helical) occupy residues 90–110 (ASMM…TGGF), 116–136 (LTWV…VTGY), and 186–206 (LHTF…FLMI). Residues histidine 187 and histidine 202 each coordinate heme b.

It belongs to the cytochrome b family. PetB subfamily. As to quaternary structure, the 4 large subunits of the cytochrome b6-f complex are cytochrome b6, subunit IV (17 kDa polypeptide, PetD), cytochrome f and the Rieske protein, while the 4 small subunits are PetG, PetL, PetM and PetN. The complex functions as a dimer. The cofactor is heme b. Heme c serves as cofactor.

The protein localises to the plastid. It is found in the chloroplast thylakoid membrane. Component of the cytochrome b6-f complex, which mediates electron transfer between photosystem II (PSII) and photosystem I (PSI), cyclic electron flow around PSI, and state transitions. The polypeptide is Cytochrome b6 (Huperzia lucidula (Shining clubmoss)).